Here is a 453-residue protein sequence, read N- to C-terminus: Tubulin alpha-1 chain (453 aa).

GTP contacts are provided by Gln11, Glu71, Gly144, Thr145, Thr179, Asn206, and Asn228. A Mg(2+)-binding site is contributed by Glu71. Glu254 is an active-site residue. Positions 433–453 are disordered; sequence EEVGAETADGDGEEEEFGEEY.

Belongs to the tubulin family. As to quaternary structure, dimer of alpha and beta chains. A typical microtubule is a hollow water-filled tube with an outer diameter of 25 nm and an inner diameter of 15 nM. Alpha-beta heterodimers associate head-to-tail to form protofilaments running lengthwise along the microtubule wall with the beta-tubulin subunit facing the microtubule plus end conferring a structural polarity. Microtubules usually have 13 protofilaments but different protofilament numbers can be found in some organisms and specialized cells. Mg(2+) serves as cofactor. In terms of processing, undergoes a tyrosination/detyrosination cycle, the cyclic removal and re-addition of a C-terminal tyrosine residue by the enzymes tubulin tyrosine carboxypeptidase (TTCP) and tubulin tyrosine ligase (TTL), respectively.

It localises to the cytoplasm. Its subcellular location is the cytoskeleton. It catalyses the reaction GTP + H2O = GDP + phosphate + H(+). Functionally, tubulin is the major constituent of microtubules, a cylinder consisting of laterally associated linear protofilaments composed of alpha- and beta-tubulin heterodimers. Microtubules grow by the addition of GTP-tubulin dimers to the microtubule end, where a stabilizing cap forms. Below the cap, tubulin dimers are in GDP-bound state, owing to GTPase activity of alpha-tubulin. This Pelvetia fastigiata (Brown alga) protein is Tubulin alpha-1 chain (TUBA1).